The following is a 169-amino-acid chain: Cell division inhibitor SulA (169 aa).

Over residues 1–15 (MFTSAHANRSAQASA) the composition is skewed to polar residues. The interval 1–22 (MFTSAHANRSAQASASAGHYAH) is disordered. The interval 106–112 (ALRTGNY) is ftsZ binding. Residues 162 to 169 (KIHSNLYH) are lon protease binding.

This sequence belongs to the SulA family. In terms of assembly, interacts with FtsZ. In terms of processing, is rapidly cleaved and degraded by the Lon protease once DNA damage is repaired.

In terms of biological role, component of the SOS system and an inhibitor of cell division. Accumulation of SulA causes rapid cessation of cell division and the appearance of long, non-septate filaments. In the presence of GTP, binds a polymerization-competent form of FtsZ in a 1:1 ratio, thus inhibiting FtsZ polymerization and therefore preventing it from participating in the assembly of the Z ring. This mechanism prevents the premature segregation of damaged DNA to daughter cells during cell division. The polypeptide is Cell division inhibitor SulA (Klebsiella pneumoniae (strain 342)).